Here is a 644-residue protein sequence, read N- to C-terminus: Macrolide export ATP-binding/permease protein MacB (644 aa).

The ABC transporter domain occupies 7–245 (IELQDITRSF…IPETDQNGRR (239 aa)). Residue 43–50 (GPSGSGKS) coordinates ATP. Transmembrane regions (helical) follow at residues 271 to 291 (ALTLLGIVIGVASVITMLAIG), 526 to 546 (IAAISLLVGGIGVMNIMLVSV), 570 to 590 (FLTEAWLVSAIGGLIGVVIGI), and 607 to 627 (LLPMALAFGCAFATGLLFGFL).

It belongs to the ABC transporter superfamily. Macrolide exporter (TC 3.A.1.122) family. As to quaternary structure, homodimer. Part of the tripartite efflux system MacAB-TolC, which is composed of an inner membrane transporter, MacB, a periplasmic membrane fusion protein, MacA, and an outer membrane component, TolC. The complex forms a large protein conduit and can translocate molecules across both the inner and outer membranes. Interacts with MacA.

It is found in the cell inner membrane. In terms of biological role, part of the tripartite efflux system MacAB-TolC. MacB is a non-canonical ABC transporter that contains transmembrane domains (TMD), which form a pore in the inner membrane, and an ATP-binding domain (NBD), which is responsible for energy generation. Confers resistance against macrolides. In Marinobacter nauticus (strain ATCC 700491 / DSM 11845 / VT8) (Marinobacter aquaeolei), this protein is Macrolide export ATP-binding/permease protein MacB.